An 83-amino-acid chain; its full sequence is Small ribosomal subunit protein uS17 (83 aa).

The protein belongs to the universal ribosomal protein uS17 family. Part of the 30S ribosomal subunit.

Its function is as follows. One of the primary rRNA binding proteins, it binds specifically to the 5'-end of 16S ribosomal RNA. This Colwellia psychrerythraea (strain 34H / ATCC BAA-681) (Vibrio psychroerythus) protein is Small ribosomal subunit protein uS17.